Reading from the N-terminus, the 486-residue chain is UDP-N-acetylglucosamine pyrophosphorylase (486 aa).

A Substrate binding motif is present at residues 109–112 (MAGG). UTP is bound by residues 109 to 112 (MAGG), lysine 123, glutamine 199, and glycine 226. Asparagine 227 lines the substrate pocket. Aspartate 257 contributes to the UTP binding site. The short motif at 309–310 (EY) is the Substrate binding element. Lysine 389 contributes to the UTP binding site. Lysine 421 is a substrate binding site.

This sequence belongs to the UDPGP type 1 family.

Its subcellular location is the cytoplasm. The catalysed reaction is N-acetyl-alpha-D-glucosamine 1-phosphate + UTP + H(+) = UDP-N-acetyl-alpha-D-glucosamine + diphosphate. It functions in the pathway nucleotide-sugar biosynthesis; UDP-N-acetyl-alpha-D-glucosamine biosynthesis; UDP-N-acetyl-alpha-D-glucosamine from N-acetyl-alpha-D-glucosamine 1-phosphate: step 1/1. The polypeptide is UDP-N-acetylglucosamine pyrophosphorylase (UAP1) (Candida albicans (Yeast)).